Consider the following 333-residue polypeptide: Transaldolase (333 aa).

K135 functions as the Schiff-base intermediate with substrate in the catalytic mechanism.

This sequence belongs to the transaldolase family. Type 1 subfamily. As to quaternary structure, homodimer.

The protein localises to the cytoplasm. It catalyses the reaction D-sedoheptulose 7-phosphate + D-glyceraldehyde 3-phosphate = D-erythrose 4-phosphate + beta-D-fructose 6-phosphate. The protein operates within carbohydrate degradation; pentose phosphate pathway; D-glyceraldehyde 3-phosphate and beta-D-fructose 6-phosphate from D-ribose 5-phosphate and D-xylulose 5-phosphate (non-oxidative stage): step 2/3. Its function is as follows. Transaldolase is important for the balance of metabolites in the pentose-phosphate pathway. This Prochlorococcus marinus subsp. pastoris (strain CCMP1986 / NIES-2087 / MED4) protein is Transaldolase.